The primary structure comprises 563 residues: MSGKQMDVIASIQEYINKILTNIQGMKVLVLDKETAGIVSMVYTQSEILQKEVFLFEKIENTKEKMLHMKGVYFIRPTQENIQSICDELKDPKFNKYHLFFTNTISKVSLDEIAKADEQDVVSEIQEYFGDFFAVNPDTFTLNLPGMLTKKSPRWQGDVGRVVDGLFSSLLALKKKPVIRYSSNSDTTRYLAEKITERMNRDRDLFDFRRQGEPLLLILDRKDDPITPLLHQWTYQAMIHELLTINNNRVSLAKAPGIKDELKEVVLSLDHDIFYKENLYKNFGDLGASIKDLVDQFQDKMNTNQNIQTIDDMKKFIENYPNFQKFSTTVSKHVSLMDELNRLISLDNLMEVSEVQQELACNHDHNSIYNHVLEIVNDSKYTDRDKLVLVLLYSIRYEDGRVWELKEKLSSIGIPPKEIGLIDTLRGYAGASLREGDLLGTKNIFSFARSVVKRGLQGVSNIYTQHKPLLHDILDSILKNKLKETSYPYLSTTQSRERPQDVIIFMVGGITYEEALTVYTFNSLNTGVCRVVLGGTSILNREQFLEDLSSTQISNPSSSSGRR.

Belongs to the STXBP/unc-18/SEC1 family.

It is found in the golgi apparatus membrane. Its subcellular location is the endosome membrane. Its function is as follows. May play a role in vesicle-mediated protein trafficking from the Golgi stack through the trans-Golgi network. The chain is Vacuolar protein sorting-associated protein 45 (vps45) from Dictyostelium discoideum (Social amoeba).